The primary structure comprises 767 residues: Transducin-like enhancer protein 1 (767 aa).

Disordered regions lie at residues 1 to 26 (MFPQ…PPQS) and 200 to 346 (ADAE…TSAS). Basic and acidic residues-rich tracts occupy residues 200–209 (ADAEHRERDP), 235–255 (RKTE…RSED), and 277–289 (NGVD…RKDP). The CCN domain stretch occupies residues 212–274 (SCLTLPNGER…SPHSVHSYSS (63 aa)). Residues 294-306 (PNSMTSSSSVSPS) are compositionally biased toward low complexity. Positions 324–346 (LKSSTPNSQSDLNTPGPSGTSAS) are enriched in polar residues. WD repeat units follow at residues 467-498 (GIPR…HVYT), 525-555 (NRDN…SIWD), 569-599 (SSAP…VVWD), 611-641 (GHTD…RCWD), 693-723 (LHES…NAWR), and 734-764 (KESS…TVYE).

This sequence belongs to the WD repeat Groucho/TLE family. Post-translationally, ubiquitinated by XIAP/BIRC4. As to expression, abundantly expressed in brain, lung, testis and ovary in comparison with liver, heart, kidney and spleen. Ubiquitously expressed in the developing embryo. Present in unfertilized and fertilized eggs.

It is found in the nucleus. In terms of biological role, nuclear effector molecule. This Xenopus laevis (African clawed frog) protein is Transducin-like enhancer protein 1 (esg1).